A 465-amino-acid chain; its full sequence is Glucose-1-phosphate adenylyltransferase (465 aa).

Residues G164, E181–K182, and S199 contribute to the alpha-D-glucose 1-phosphate site.

The protein belongs to the bacterial/plant glucose-1-phosphate adenylyltransferase family. Homotetramer.

It catalyses the reaction alpha-D-glucose 1-phosphate + ATP + H(+) = ADP-alpha-D-glucose + diphosphate. Its pathway is glycan biosynthesis; glycogen biosynthesis. Functionally, involved in the biosynthesis of ADP-glucose, a building block required for the elongation reactions to produce glycogen. Catalyzes the reaction between ATP and alpha-D-glucose 1-phosphate (G1P) to produce pyrophosphate and ADP-Glc. In Arthrobacter sp. (strain FB24), this protein is Glucose-1-phosphate adenylyltransferase.